The chain runs to 258 residues: MNFIIIIPARFFSSRFPGKLLADIQGKPMIIRVIEKALTTKTTKIIVATDSVSIKQIVEYEYYSFGDKVEVCLTYSDHQSGTERISEIVKRYRFADDQIIVQLQGDEPLISSYMIHQIVDVFNMTTSNNISVSTLATPIFFYNEVIDSNIVKVVVNIYGVALYFSRSMIPWMSINHDFNQELGIWLRHIGIYAYRVNFLSRYMNWIKSSLEKYEMLEQLRILWNGETIYVSVMDNIRNISVDTPESLRKVNELFLISN.

Belongs to the KdsB family.

It localises to the cytoplasm. It carries out the reaction 3-deoxy-alpha-D-manno-oct-2-ulosonate + CTP = CMP-3-deoxy-beta-D-manno-octulosonate + diphosphate. It functions in the pathway nucleotide-sugar biosynthesis; CMP-3-deoxy-D-manno-octulosonate biosynthesis; CMP-3-deoxy-D-manno-octulosonate from 3-deoxy-D-manno-octulosonate and CTP: step 1/1. Its pathway is bacterial outer membrane biogenesis; lipopolysaccharide biosynthesis. Its function is as follows. Activates KDO (a required 8-carbon sugar) for incorporation into bacterial lipopolysaccharide in Gram-negative bacteria. This is 3-deoxy-manno-octulosonate cytidylyltransferase from Blochmanniella floridana.